A 336-amino-acid chain; its full sequence is N-((2S)-2-amino-2-carboxyethyl)-L-glutamate dehydrogenase (336 aa).

The Proton donor/acceptor role is filled by K78. NAD(+)-binding residues include R122 and K242.

This sequence belongs to the ornithine cyclodeaminase/mu-crystallin family. As to quaternary structure, homodimer.

The catalysed reaction is N-[(2S)-2-amino-2-carboxyethyl]-L-glutamate + NAD(+) + H2O = (S)-2,3-diaminopropanoate + 2-oxoglutarate + NADH + H(+). It participates in siderophore biosynthesis. Functionally, catalyzes the hydrolysis of N-((2S)-2-amino-2-carboxyethyl)-L-glutamate (ACEGA) to form L-2,3-diaminopropionic acid and 2-oxoglutarate. Involved in the biosynthesis of L-2,3-diaminopropionic acid (L-Dap), a precursor of staphyloferrin B and antibiotics. The polypeptide is N-((2S)-2-amino-2-carboxyethyl)-L-glutamate dehydrogenase (Staphylococcus aureus (strain NCTC 8325 / PS 47)).